Here is a 437-residue protein sequence, read N- to C-terminus: Homogentisate 1,2-dioxygenase (437 aa).

Catalysis depends on H295, which acts as the Proton acceptor. Residues H338 and E344 each coordinate Fe cation. Homogentisate is bound by residues Y353 and H374. Residue H374 participates in Fe cation binding.

The protein belongs to the homogentisate dioxygenase family. In terms of assembly, hexamer; dimer of trimers. It depends on Fe cation as a cofactor.

It catalyses the reaction homogentisate + O2 = 4-maleylacetoacetate + H(+). It participates in amino-acid degradation; L-phenylalanine degradation; acetoacetate and fumarate from L-phenylalanine: step 4/6. Its function is as follows. Involved in the catabolism of homogentisate (2,5-dihydroxyphenylacetate or 2,5-OH-PhAc), a central intermediate in the degradation of phenylalanine and tyrosine. Catalyzes the oxidative ring cleavage of the aromatic ring of homogentisate to yield maleylacetoacetate. In Myxococcus xanthus (strain DK1622), this protein is Homogentisate 1,2-dioxygenase.